Consider the following 116-residue polypeptide: Large ribosomal subunit protein bL17 (116 aa).

The protein belongs to the bacterial ribosomal protein bL17 family. As to quaternary structure, part of the 50S ribosomal subunit. Contacts protein L32.

In Prochlorococcus marinus (strain MIT 9303), this protein is Large ribosomal subunit protein bL17.